The sequence spans 101 residues: UPF0235 protein SG2030 (101 aa).

The protein belongs to the UPF0235 family.

The chain is UPF0235 protein SG2030 from Sodalis glossinidius (strain morsitans).